We begin with the raw amino-acid sequence, 382 residues long: 3-phytase (382 aa).

An N-terminal signal peptide occupies residues 1-26; sequence MKVPKTMLLSTAAGLLLSLTATSVSA. The BPP domain occupies 27–361; that stretch reads HYVNEEHHFK…VSWEQIAQHL (335 aa).

Its subcellular location is the secreted. The enzyme catalyses 1D-myo-inositol hexakisphosphate + H2O = 1D-myo-inositol 1,2,4,5,6-pentakisphosphate + phosphate. This Bacillus subtilis (strain 168) protein is 3-phytase (phy).